The sequence spans 316 residues: Glutamyl endopeptidase (316 aa).

Positions 1 to 30 (MVSKKSVKRGLITGLIGISIYSLGMHPAQA) are cleaved as a signal peptide. Positions 31–94 (APSPHTPVSS…SPAKAPYSIK (64 aa)) are excised as a propeptide. A disulfide bridge connects residues C126 and C142. Residues H141 and S261 each act as charge relay system in the active site. A disulfide bridge links C275 with C279.

This sequence belongs to the peptidase S1B family.

It localises to the secreted. The enzyme catalyses Preferential cleavage: Glu-|-Xaa, Asp-|-Xaa.. In terms of biological role, specific for hydrolysis of peptide bonds on the carboxyl side of acidic amino acid residues, with a strong preference for Glu. This Bacillus licheniformis (strain ATCC 14580 / DSM 13 / JCM 2505 / CCUG 7422 / NBRC 12200 / NCIMB 9375 / NCTC 10341 / NRRL NRS-1264 / Gibson 46) protein is Glutamyl endopeptidase (blaSE).